We begin with the raw amino-acid sequence, 312 residues long: uncharacterized protein (312 aa).

6 helical membrane-spanning segments follow: residues 9-29 (LTLT…GLFI), 115-135 (LATL…IGFI), 187-207 (ITIA…DYIT), 224-244 (ITVA…AGEF), 264-284 (ILSS…IYGF), and 292-312 (MIST…TLIL).

The protein localises to the cell membrane. This is an uncharacterized protein from Methanocaldococcus jannaschii (strain ATCC 43067 / DSM 2661 / JAL-1 / JCM 10045 / NBRC 100440) (Methanococcus jannaschii).